Reading from the N-terminus, the 376-residue chain is WD repeat-containing protein wdr-5.1 (376 aa).

The span at 1 to 24 shows a compositional bias: polar residues; sequence MDTSENAASAAEQQPTQQIDQLTV. The segment at 1–70 is disordered; sequence MDTSENAASA…TPNPNAAGAS (70 aa). Residues 25-53 show a composition bias toward low complexity; it reads PNAPDGGSSAPAPSTSPNSISPSNPTGTP. WD repeat units lie at residues 85-115, 127-157, 169-199, 211-241, 254-284, 296-329, and 341-373; these read GHTK…KIWN, GHKL…KIFE, GHNN…RIWD, AHSD…RIWD, DENP…KLWD, GHEN…YIWN, and GHTQ…HIWR.

Belongs to the WD repeat WDR5/wds family. In terms of assembly, component of the SET2 complex (also known as the SET1/COMPASS complex), which contains at least set-2, swd-2.1, cfp-1, rbbp-5, wdr-5.1, dpy-30 and ash-2. Within the complex, interacts with cfp-1, ash-2, dpy-30 and hda-1. Interacts with histone H3 both unmethylated and methylated at 'Lys-4'. Interacts with jmjd-3.1, ceh-6, sox-2, sem-4 and egl-27. Interacts with set-2. Enriched in the germline. Detected in all nuclei of the embryo. In larvae, expression is detected in the nuclei of seam cells, somatic gonad precursor cells Z1 and Z4, vulval precursor cells, distal tip cells, hypodermal cells, intestinal and muscle cells. Also detected in the neurons from the ventral nerve cord, head and tail region. Expressed in the head and tail region, intestinal cells, muscle cells, cells of the vulva, spermatheca and sheath cells in adults.

It is found in the nucleus. Its function is as follows. Contributes to histone modification. May position the N-terminus of histone H3 for efficient trimethylation at 'Lys-4'. Required for di- and trimethylation, particularly for the trimethylation at 'Lys-4' of histone H3. Not required for demethylation of histone H3 'Lys-27'. H3 'Lys-4' methylation represents a specific tag for epigenetic transcriptional activation, germline establishment, maintenance and function. Implicated in the epigenetic inheritance of lifespan over several generations. Acts in the germline to limit the longevity of the soma, probably by regulating a lipid metabolism pathway that signals from the germline to the intestine, thereby preventing accumulation of mono-unsaturated fatty acids. Required for RNA interference with probable antagonistic role against hpl-2 function. Plays a role in vulval cell fate specification by acting in the synthetic multivulva pathway independent of set-2. Sex determining protein required in the germline to promote the spermatogenesis to oogenesis switch during the late larval stages of development. Acts with the sex determining factor tra-1, and redundantly with wdr-5.2, to regulate fog-3 expression, which in turn determines germ cell fate. Cooperates with jmjd-3.1, egl-27 and unc-3 to ensure robust transdifferentiation of the Y rectal cell to the PDA motor neuron during larval development. The sequence is that of WD repeat-containing protein wdr-5.1 (wdr-5.1) from Caenorhabditis elegans.